The following is a 246-amino-acid chain: tRNA (guanine-N(1)-)-methyltransferase (246 aa).

Residues glycine 117 and isoleucine 137–leucine 142 contribute to the S-adenosyl-L-methionine site.

Belongs to the RNA methyltransferase TrmD family. In terms of assembly, homodimer.

It localises to the cytoplasm. It catalyses the reaction guanosine(37) in tRNA + S-adenosyl-L-methionine = N(1)-methylguanosine(37) in tRNA + S-adenosyl-L-homocysteine + H(+). Functionally, specifically methylates guanosine-37 in various tRNAs. The polypeptide is tRNA (guanine-N(1)-)-methyltransferase (Acinetobacter baumannii (strain SDF)).